A 155-amino-acid polypeptide reads, in one-letter code: Endoribonuclease YbeY (155 aa).

Zn(2+)-binding residues include H114, H118, and H124.

It belongs to the endoribonuclease YbeY family. The cofactor is Zn(2+).

The protein resides in the cytoplasm. Single strand-specific metallo-endoribonuclease involved in late-stage 70S ribosome quality control and in maturation of the 3' terminus of the 16S rRNA. This is Endoribonuclease YbeY from Cronobacter sakazakii (strain ATCC BAA-894) (Enterobacter sakazakii).